The chain runs to 136 residues: Translation initiation factor 5A (136 aa).

K36 bears the Hypusine mark.

The protein belongs to the eIF-5A family.

Its subcellular location is the cytoplasm. Functionally, functions by promoting the formation of the first peptide bond. This chain is Translation initiation factor 5A (eIF5A), found in Hyperthermus butylicus (strain DSM 5456 / JCM 9403 / PLM1-5).